A 1088-amino-acid polypeptide reads, in one-letter code: RNA-directed RNA polymerase (1088 aa).

One can recognise a RdRp catalytic domain in the interval 501 to 687 (LSYGDVTRFL…AKRYIAGGKI (187 aa)).

The protein belongs to the reoviridae RNA-directed RNA polymerase family. In terms of assembly, interacts with VP3 (Potential). Interacts with VP2; this interaction activates VP1. Interacts with NSP5; this interaction is probably necessary for the formation of functional virus factories. Interacts with NSP2; this interaction is weak. Requires Mg(2+) as cofactor.

Its subcellular location is the virion. The enzyme catalyses RNA(n) + a ribonucleoside 5'-triphosphate = RNA(n+1) + diphosphate. RNA-directed RNA polymerase that is involved in both transcription and genome replication. Together with VP3 capping enzyme, forms an enzyme complex positioned near the channels situated at each of the five-fold vertices of the core. Following infection, the outermost layer of the virus is lost, leaving a double-layered particle (DLP) made up of the core and VP6 shell. VP1 then catalyzes the transcription of fully conservative plus-strand genomic RNAs that are extruded through the DLP's channels into the cytoplasm where they function as mRNAs for translation of viral proteins. One copy of each of the viral (+)RNAs is also recruited during core assembly, together with newly synthesized polymerase complexes and VP2. The polymerase of these novo-formed particles catalyzes the synthesis of complementary minus-strands leading to dsRNA formation. To do so, the polymerase specifically recognizes and binds 4 bases 5'-UGUG-3' in the conserved 3'-sequence of plus-strand RNA templates. VP2 presumably activates the autoinhibited VP1-RNA complex to coordinate packaging and genome replication. Once dsRNA synthesis is complete, the polymerase switches to the transcriptional mode, thus providing secondary transcription. In Rotavirus A (strain RVA/SA11-Both/G3P5B[2]) (RV-A), this protein is RNA-directed RNA polymerase.